The primary structure comprises 364 residues: Glycine oxidase (364 aa).

Residues 12–13 (VI), 32–33 (ER), 40–41 (AS), 45–47 (GGI), and Val-173 contribute to the FAD site. Residue Arg-302 participates in substrate binding. 327 to 333 (HYRNGLV) is an FAD binding site.

It belongs to the DAO family. ThiO subfamily. In terms of assembly, monomer. Requires FAD as cofactor.

The catalysed reaction is glycine + O2 + H2O = glyoxylate + H2O2 + NH4(+). The enzyme catalyses sarcosine + O2 + H2O = methylamine + glyoxylate + H2O2. The protein operates within cofactor biosynthesis; thiamine diphosphate biosynthesis. Catalyzes the oxidation of glycine, leading to glyoxyl imine and hydrogen peroxide as primary products; glyoxyl imine is used for the biosynthesis of the thiazole ring of thiamine. Otherwise, glyoxyl imine is spontaneously hydrolyzed in water to produce glyoxylate and ammonia. Can also use sarcosine (N-methylglycine) as substrate. The chain is Glycine oxidase from Pseudomonas aeruginosa (strain ATCC 15692 / DSM 22644 / CIP 104116 / JCM 14847 / LMG 12228 / 1C / PRS 101 / PAO1).